We begin with the raw amino-acid sequence, 430 residues long: Tol-Pal system protein TolB (430 aa).

Positions 1 to 21 (MRRFVTLLIALLCLSATAVQA) are cleaved as a signal peptide.

It belongs to the TolB family. In terms of assembly, the Tol-Pal system is composed of five core proteins: the inner membrane proteins TolA, TolQ and TolR, the periplasmic protein TolB and the outer membrane protein Pal. They form a network linking the inner and outer membranes and the peptidoglycan layer.

Its subcellular location is the periplasm. Functionally, part of the Tol-Pal system, which plays a role in outer membrane invagination during cell division and is important for maintaining outer membrane integrity. The chain is Tol-Pal system protein TolB from Syntrophotalea carbinolica (strain DSM 2380 / NBRC 103641 / GraBd1) (Pelobacter carbinolicus).